Consider the following 146-residue polypeptide: Acidic phospholipase A2 D (146 aa).

An N-terminal signal peptide occupies residues 1 to 21 (MNPAHLLILAAVCVSPLGASS). Residues 22–27 (NRPMPL) constitute a propeptide that is removed on maturation. 7 cysteine pairs are disulfide-bonded: Cys-38–Cys-98, Cys-53–Cys-145, Cys-55–Cys-71, Cys-70–Cys-126, Cys-77–Cys-119, Cys-87–Cys-112, and Cys-105–Cys-117. Ca(2+)-binding residues include Tyr-54, Gly-56, and Gly-58. Residue His-74 is part of the active site. Residue Asp-75 coordinates Ca(2+). Asp-120 is a catalytic residue.

This sequence belongs to the phospholipase A2 family. Group I subfamily. D49 sub-subfamily. Ca(2+) serves as cofactor. As to expression, expressed by the venom gland.

The protein resides in the secreted. The enzyme catalyses a 1,2-diacyl-sn-glycero-3-phosphocholine + H2O = a 1-acyl-sn-glycero-3-phosphocholine + a fatty acid + H(+). In terms of biological role, PLA2 catalyzes the calcium-dependent hydrolysis of the 2-acyl groups in 3-sn-phosphoglycerides. This Naja sputatrix (Malayan spitting cobra) protein is Acidic phospholipase A2 D.